Reading from the N-terminus, the 332-residue chain is Phosphate acyltransferase (332 aa).

It belongs to the PlsX family. As to quaternary structure, homodimer. Probably interacts with PlsY.

The protein localises to the cytoplasm. It catalyses the reaction a fatty acyl-[ACP] + phosphate = an acyl phosphate + holo-[ACP]. It participates in lipid metabolism; phospholipid metabolism. Functionally, catalyzes the reversible formation of acyl-phosphate (acyl-PO(4)) from acyl-[acyl-carrier-protein] (acyl-ACP). This enzyme utilizes acyl-ACP as fatty acyl donor, but not acyl-CoA. The chain is Phosphate acyltransferase from Oceanobacillus iheyensis (strain DSM 14371 / CIP 107618 / JCM 11309 / KCTC 3954 / HTE831).